Reading from the N-terminus, the 277-residue chain is Sulfur carrier protein FdhD (277 aa).

Cysteine 121 functions as the Cysteine persulfide intermediate in the catalytic mechanism. 260 to 265 lines the Mo-bis(molybdopterin guanine dinucleotide) pocket; it reads FCKPGR.

The protein belongs to the FdhD family.

The protein localises to the cytoplasm. Its function is as follows. Required for formate dehydrogenase (FDH) activity. Acts as a sulfur carrier protein that transfers sulfur from IscS to the molybdenum cofactor prior to its insertion into FDH. The sequence is that of Sulfur carrier protein FdhD from Escherichia coli O6:H1 (strain CFT073 / ATCC 700928 / UPEC).